We begin with the raw amino-acid sequence, 693 residues long: Glycine--tRNA ligase beta subunit (693 aa).

It belongs to the class-II aminoacyl-tRNA synthetase family. Tetramer of two alpha and two beta subunits.

It localises to the cytoplasm. It catalyses the reaction tRNA(Gly) + glycine + ATP = glycyl-tRNA(Gly) + AMP + diphosphate. The polypeptide is Glycine--tRNA ligase beta subunit (glyS) (Halalkalibacterium halodurans (strain ATCC BAA-125 / DSM 18197 / FERM 7344 / JCM 9153 / C-125) (Bacillus halodurans)).